The chain runs to 257 residues: Pyridoxine 5'-phosphate synthase (257 aa).

Asn-16 contacts 3-amino-2-oxopropyl phosphate. 18–19 serves as a coordination point for 1-deoxy-D-xylulose 5-phosphate; the sequence is DH. Residue Arg-27 participates in 3-amino-2-oxopropyl phosphate binding. His-52 (proton acceptor) is an active-site residue. 1-deoxy-D-xylulose 5-phosphate contacts are provided by Arg-54 and His-59. Catalysis depends on Glu-79, which acts as the Proton acceptor. Thr-109 serves as a coordination point for 1-deoxy-D-xylulose 5-phosphate. Residue His-200 is the Proton donor of the active site. Residues Gly-201 and 222–223 each bind 3-amino-2-oxopropyl phosphate; that span reads GH.

The protein belongs to the PNP synthase family. As to quaternary structure, homooctamer; tetramer of dimers.

The protein resides in the cytoplasm. It catalyses the reaction 3-amino-2-oxopropyl phosphate + 1-deoxy-D-xylulose 5-phosphate = pyridoxine 5'-phosphate + phosphate + 2 H2O + H(+). It participates in cofactor biosynthesis; pyridoxine 5'-phosphate biosynthesis; pyridoxine 5'-phosphate from D-erythrose 4-phosphate: step 5/5. In terms of biological role, catalyzes the complicated ring closure reaction between the two acyclic compounds 1-deoxy-D-xylulose-5-phosphate (DXP) and 3-amino-2-oxopropyl phosphate (1-amino-acetone-3-phosphate or AAP) to form pyridoxine 5'-phosphate (PNP) and inorganic phosphate. This chain is Pyridoxine 5'-phosphate synthase, found in Burkholderia pseudomallei (strain K96243).